We begin with the raw amino-acid sequence, 188 residues long: GTP cyclohydrolase 1 (188 aa).

Residues Cys-78, His-81, and Cys-150 each contribute to the Zn(2+) site.

This sequence belongs to the GTP cyclohydrolase I family. In terms of assembly, toroid-shaped homodecamer, composed of two pentamers of five dimers.

The catalysed reaction is GTP + H2O = 7,8-dihydroneopterin 3'-triphosphate + formate + H(+). The protein operates within cofactor biosynthesis; 7,8-dihydroneopterin triphosphate biosynthesis; 7,8-dihydroneopterin triphosphate from GTP: step 1/1. The polypeptide is GTP cyclohydrolase 1 (Halalkalibacterium halodurans (strain ATCC BAA-125 / DSM 18197 / FERM 7344 / JCM 9153 / C-125) (Bacillus halodurans)).